The primary structure comprises 146 residues: Hemoglobin subunit delta (146 aa).

In terms of domain architecture, Globin spans 2–146 (HLTGEEKSAV…VATALAHKYH (145 aa)). Ser50 is modified (phosphoserine). The heme b site is built by His63 and His92.

Belongs to the globin family. As to quaternary structure, heterotetramer of two delta chains and two alpha chains. In terms of tissue distribution, red blood cells.

The polypeptide is Hemoglobin subunit delta (HBD) (Leontocebus nigricollis (Black-mantled tamarin)).